A 113-amino-acid polypeptide reads, in one-letter code: T cell receptor alpha variable 13-2 (113 aa).

Residues 1–21 (MAGIRALFMYLWLQLDWVSRG) form the signal peptide. Positions 22–113 (ESVGLHLPTL…DSAVYFCAEN (92 aa)) constitute an Ig-like domain. Cysteine 43 and cysteine 110 are disulfide-bonded. A glycan (N-linked (GlcNAc...) asparagine) is linked at asparagine 87.

As to quaternary structure, alpha-beta TR is a heterodimer composed of an alpha and beta chain; disulfide-linked. The alpha-beta TR is associated with the transmembrane signaling CD3 coreceptor proteins to form the TR-CD3 (TcR or TCR). The assembly of alpha-beta TR heterodimers with CD3 occurs in the endoplasmic reticulum where a single alpha-beta TR heterodimer associates with one CD3D-CD3E heterodimer, one CD3G-CD3E heterodimer and one CD247 homodimer forming a stable octameric structure. CD3D-CD3E and CD3G-CD3E heterodimers preferentially associate with TR alpha and TR beta chains, respectively. The association of the CD247 homodimer is the last step of TcR assembly in the endoplasmic reticulum and is required for transport to the cell surface.

The protein resides in the cell membrane. In terms of biological role, v region of the variable domain of T cell receptor (TR) alpha chain that participates in the antigen recognition. Alpha-beta T cell receptors are antigen specific receptors which are essential to the immune response and are present on the cell surface of T lymphocytes. Recognize peptide-major histocompatibility (MH) (pMH) complexes that are displayed by antigen presenting cells (APC), a prerequisite for efficient T cell adaptive immunity against pathogens. Binding of alpha-beta TR to pMH complex initiates TR-CD3 clustering on the cell surface and intracellular activation of LCK that phosphorylates the ITAM motifs of CD3G, CD3D, CD3E and CD247 enabling the recruitment of ZAP70. In turn ZAP70 phosphorylates LAT, which recruits numerous signaling molecules to form the LAT signalosome. The LAT signalosome propagates signal branching to three major signaling pathways, the calcium, the mitogen-activated protein kinase (MAPK) kinase and the nuclear factor NF-kappa-B (NF-kB) pathways, leading to the mobilization of transcription factors that are critical for gene expression and essential for T cell growth and differentiation. The T cell repertoire is generated in the thymus, by V-(D)-J rearrangement. This repertoire is then shaped by intrathymic selection events to generate a peripheral T cell pool of self-MH restricted, non-autoaggressive T cells. Post-thymic interaction of alpha-beta TR with the pMH complexes shapes TR structural and functional avidity. This is T cell receptor alpha variable 13-2 from Homo sapiens (Human).